The primary structure comprises 84 residues: Cell division topological specificity factor (84 aa).

Belongs to the MinE family.

In terms of biological role, prevents the cell division inhibition by proteins MinC and MinD at internal division sites while permitting inhibition at polar sites. This ensures cell division at the proper site by restricting the formation of a division septum at the midpoint of the long axis of the cell. This Burkholderia multivorans (strain ATCC 17616 / 249) protein is Cell division topological specificity factor.